The primary structure comprises 482 residues: Putative metabolite transport protein YfiG (482 aa).

Residues 1-29 (MSTKKKEAVIGKESLAHKGLLRTITLVST) are Cytoplasmic-facing. Residues 30-50 (FGGLLFGYDTGVINGALPFMA) traverse the membrane as a helical segment. At 51-59 (TAGQLNLTP) the chain is on the extracellular side. A helical transmembrane segment spans residues 60–80 (VTEGLVASSLLLGAAFGAMFG). At 81-92 (GRLSDRHGRRKT) the chain is on the cytoplasmic side. A helical transmembrane segment spans residues 93-113 (ILYLALLFIAATLGCTFSPNA). Residues 114–120 (SVMIAFR) lie on the Extracellular side of the membrane. Residues 121 to 141 (FLLGLAVGCASVTVPTFLAEI) form a helical membrane-spanning segment. Residues 142–155 (SPAERRGRIVTQNE) lie on the Cytoplasmic side of the membrane. A helical transmembrane segment spans residues 156–176 (LMIVIGQLLAYTFNAIIGSTM). Over 177–184 (GESANVWR) the chain is Extracellular. The chain crosses the membrane as a helical span at residues 185–205 (YMLVIATLPAVVLWFGMLIVP). The Cytoplasmic portion of the chain corresponds to 206 to 263 (ESPRWLAAKGRMGDALRVLRQIREDSQAQQEIKEIKHAIEGTAKKAGFHDFQEPWIRR). Residues 264–284 (ILFIGIGIAIVQQITGVNSIM) traverse the membrane as a helical segment. At 285 to 301 (YYGTEILREAGFQTEAA) the chain is on the extracellular side. The helical transmembrane segment at 302-322 (LIGNIANGVISVIAVIFGIWL) threads the bilayer. The Cytoplasmic portion of the chain corresponds to 323-331 (LGKVRRRPM). Transmembrane regions (helical) follow at residues 332 to 352 (LIIG…LSIV) and 353 to 373 (LEGT…FLAF). Over 374–400 (QQTAISTVTWLMLSEIFPMHVRGLGMG) the chain is Cytoplasmic. The chain crosses the membrane as a helical span at residues 401–421 (ISTFCLWTANFLIGFTFPILL). Over 422-423 (NH) the chain is Extracellular. Residues 424 to 444 (IGMSATFFIFVAMNILAILFV) form a helical membrane-spanning segment. Topologically, residues 445–482 (KKYVPETKGRSLEQLEHSFRQYGRRADQEIQNQTTHLS) are cytoplasmic.

The protein belongs to the major facilitator superfamily. Sugar transporter (TC 2.A.1.1) family.

It localises to the cell membrane. This Bacillus subtilis (strain 168) protein is Putative metabolite transport protein YfiG (yfiG).